We begin with the raw amino-acid sequence, 319 residues long: RNA exonuclease 4 (319 aa).

The disordered stretch occupies residues 1-75; it reads MAALSSNWKK…GGVHSSKIEE (75 aa). The Exonuclease domain occupies 132-293; that stretch reads KYIAIDCEMV…FRKHKSAFDV (162 aa). A disordered region spans residues 295–319; it reads HANRYAPKTASGGGQKGNKPKKKKK.

The protein belongs to the REXO4 family.

It localises to the nucleus. Exoribonuclease involved in ribosome biosynthesis. Involved in the processing of ITS1, the internal transcribed spacer localized between the 18S and 5.8S rRNAs. The sequence is that of RNA exonuclease 4 (REX4) from Gibberella zeae (strain ATCC MYA-4620 / CBS 123657 / FGSC 9075 / NRRL 31084 / PH-1) (Wheat head blight fungus).